Here is a 586-residue protein sequence, read N- to C-terminus: Aspartate--tRNA(Asp/Asn) ligase (586 aa).

Position 172 (Glu-172) interacts with L-aspartate. The segment at 196–199 (QLYK) is aspartate. Arg-218 provides a ligand contact to L-aspartate. Residues 218-220 (RDE) and Gln-227 contribute to the ATP site. His-446 provides a ligand contact to L-aspartate. Glu-480 is a binding site for ATP. Arg-487 is an L-aspartate binding site. 532–535 (GIDR) provides a ligand contact to ATP.

It belongs to the class-II aminoacyl-tRNA synthetase family. Type 1 subfamily. As to quaternary structure, homodimer.

It localises to the cytoplasm. It catalyses the reaction tRNA(Asx) + L-aspartate + ATP = L-aspartyl-tRNA(Asx) + AMP + diphosphate. Its function is as follows. Aspartyl-tRNA synthetase with relaxed tRNA specificity since it is able to aspartylate not only its cognate tRNA(Asp) but also tRNA(Asn). Reaction proceeds in two steps: L-aspartate is first activated by ATP to form Asp-AMP and then transferred to the acceptor end of tRNA(Asp/Asn). The protein is Aspartate--tRNA(Asp/Asn) ligase of Borreliella burgdorferi (strain ATCC 35210 / DSM 4680 / CIP 102532 / B31) (Borrelia burgdorferi).